The chain runs to 581 residues: Chaperonin GroEL 1 (581 aa).

ATP is bound by residues Thr-29 to Pro-32, Asp-86 to Thr-90, Gly-413, and Asp-492. The disordered stretch occupies residues Pro-522–Gly-541. Gly residues predominate over residues Gly-528–Gly-541.

It belongs to the chaperonin (HSP60) family. Forms a cylinder of 14 subunits composed of two heptameric rings stacked back-to-back. Interacts with the co-chaperonin GroES.

It is found in the cytoplasm. It carries out the reaction ATP + H2O + a folded polypeptide = ADP + phosphate + an unfolded polypeptide.. Together with its co-chaperonin GroES, plays an essential role in assisting protein folding. The GroEL-GroES system forms a nano-cage that allows encapsulation of the non-native substrate proteins and provides a physical environment optimized to promote and accelerate protein folding. The protein is Chaperonin GroEL 1 of Prochlorococcus marinus (strain MIT 9301).